Reading from the N-terminus, the 96-residue chain is Integration host factor subunit beta (96 aa).

Residues 59–78 (RVGRNPKTGETVSLPGKYVP) form a disordered region.

It belongs to the bacterial histone-like protein family. Heterodimer of an alpha and a beta chain.

This protein is one of the two subunits of integration host factor, a specific DNA-binding protein that functions in genetic recombination as well as in transcriptional and translational control. This chain is Integration host factor subunit beta, found in Thioalkalivibrio sulfidiphilus (strain HL-EbGR7).